The following is a 473-amino-acid chain: Photosystem II CP43 reaction center protein (473 aa).

Positions 1 to 14 (MKNLYSLRRFYHVE) are excised as a propeptide. T15 bears the N-acetylthreonine mark. The residue at position 15 (T15) is a Phosphothreonine. 5 consecutive transmembrane segments (helical) span residues 69 to 93 (LFEV…PHLA), 134 to 155 (LIGP…KDKN), 178 to 200 (KARY…RVIT), 255 to 275 (KPFG…LSYS), and 291 to 312 (WFNN…ASQA). Residue E367 coordinates [CaMn4O5] cluster. Residues 447-471 (RARAAAAGFEKGIDRDTEPTLFMRP) traverse the membrane as a helical segment.

It belongs to the PsbB/PsbC family. PsbC subfamily. PSII is composed of 1 copy each of membrane proteins PsbA, PsbB, PsbC, PsbD, PsbE, PsbF, PsbH, PsbI, PsbJ, PsbK, PsbL, PsbM, PsbT, PsbX, PsbY, PsbZ, Psb30/Ycf12, at least 3 peripheral proteins of the oxygen-evolving complex and a large number of cofactors. It forms dimeric complexes. Binds multiple chlorophylls and provides some of the ligands for the Ca-4Mn-5O cluster of the oxygen-evolving complex. It may also provide a ligand for a Cl- that is required for oxygen evolution. PSII binds additional chlorophylls, carotenoids and specific lipids. is required as a cofactor.

It is found in the plastid. It localises to the chloroplast thylakoid membrane. Its function is as follows. One of the components of the core complex of photosystem II (PSII). It binds chlorophyll and helps catalyze the primary light-induced photochemical processes of PSII. PSII is a light-driven water:plastoquinone oxidoreductase, using light energy to abstract electrons from H(2)O, generating O(2) and a proton gradient subsequently used for ATP formation. This is Photosystem II CP43 reaction center protein from Nephroselmis olivacea (Green alga).